We begin with the raw amino-acid sequence, 27 residues long: Urumin (27 aa).

As to expression, expressed by the skin glands.

The protein localises to the secreted. Amphibian peptide that shows viricidal activity against human H1N1 influenza A virus. It specifically targets the conserved stalk region of H1 hemagglutinin, and acts by actively destroying influenza virions. It shows a reduced activity on human H3N2 influenza A virus and no activity against other viruses (HIV, SIV, HSV-II, hepatitis C, Ebola, Zika, and Dengue viruses). In vivo, the peptide also protects mice infected with mouse-adapted influenza virus from lethal influenza infection. The peptide synthesized in D-amino acids is inactive. The chain is Urumin from Hydrophylax bahuvistara (Wide-spread fungoid frog).